A 278-amino-acid chain; its full sequence is Thiazole synthase (278 aa).

The active-site Schiff-base intermediate with DXP is Lys-109. Residues Gly-170, 197–198, and 219–220 each bind 1-deoxy-D-xylulose 5-phosphate; these read AG and NT.

The protein belongs to the ThiG family. As to quaternary structure, homotetramer. Forms heterodimers with either ThiH or ThiS.

The protein resides in the cytoplasm. It catalyses the reaction [ThiS sulfur-carrier protein]-C-terminal-Gly-aminoethanethioate + 2-iminoacetate + 1-deoxy-D-xylulose 5-phosphate = [ThiS sulfur-carrier protein]-C-terminal Gly-Gly + 2-[(2R,5Z)-2-carboxy-4-methylthiazol-5(2H)-ylidene]ethyl phosphate + 2 H2O + H(+). It participates in cofactor biosynthesis; thiamine diphosphate biosynthesis. In terms of biological role, catalyzes the rearrangement of 1-deoxy-D-xylulose 5-phosphate (DXP) to produce the thiazole phosphate moiety of thiamine. Sulfur is provided by the thiocarboxylate moiety of the carrier protein ThiS. In vitro, sulfur can be provided by H(2)S. This chain is Thiazole synthase, found in Cupriavidus pinatubonensis (strain JMP 134 / LMG 1197) (Cupriavidus necator (strain JMP 134)).